A 1040-amino-acid chain; its full sequence is Multidrug resistance protein MdtB (1040 aa).

Transmembrane regions (helical) follow at residues 16 to 36 (FILR…AGII), 347 to 367 (LMLA…NIPA), 369 to 389 (IIPA…MVFL), 396 to 416 (LTLM…IVVI), 440 to 460 (IGFT…PLLF), 472 to 492 (FAVT…TLTP), 537 to 557 (WLTL…WIFI), 863 to 883 (LGST…VLGV), 888 to 908 (FIHP…ALLA), 911 to 931 (IAGA…IGIV), 968 to 988 (ILMT…STGV), and 998 to 1018 (IGMV…TPVI).

Belongs to the resistance-nodulation-cell division (RND) (TC 2.A.6) family. MdtB subfamily. As to quaternary structure, part of a tripartite efflux system composed of MdtA, MdtB and MdtC. MdtB forms a heteromultimer with MdtC.

Its subcellular location is the cell inner membrane. The protein is Multidrug resistance protein MdtB of Cronobacter sakazakii (strain ATCC BAA-894) (Enterobacter sakazakii).